The chain runs to 131 residues: Ribosome-binding factor A (131 aa).

This sequence belongs to the RbfA family. Monomer. Binds 30S ribosomal subunits, but not 50S ribosomal subunits or 70S ribosomes.

It is found in the cytoplasm. One of several proteins that assist in the late maturation steps of the functional core of the 30S ribosomal subunit. Associates with free 30S ribosomal subunits (but not with 30S subunits that are part of 70S ribosomes or polysomes). Required for efficient processing of 16S rRNA. May interact with the 5'-terminal helix region of 16S rRNA. This Ruegeria sp. (strain TM1040) (Silicibacter sp.) protein is Ribosome-binding factor A.